Here is a 563-residue protein sequence, read N- to C-terminus: Arginine--tRNA ligase (563 aa).

A 'HIGH' region motif is present at residues 137–147 (ANPTGLLHMGN).

This sequence belongs to the class-I aminoacyl-tRNA synthetase family. In terms of assembly, monomer.

The protein resides in the cytoplasm. The catalysed reaction is tRNA(Arg) + L-arginine + ATP = L-arginyl-tRNA(Arg) + AMP + diphosphate. The polypeptide is Arginine--tRNA ligase (Desulforudis audaxviator (strain MP104C)).